We begin with the raw amino-acid sequence, 133 residues long: Putative actin-depolymerizing factor 11 (133 aa).

Positions 1–133 constitute an ADF-H domain; it reads MVLHDDCKLT…SLDAIRRRIN (133 aa).

Belongs to the actin-binding proteins ADF family.

The protein resides in the cytoplasm. It localises to the cytoskeleton. In terms of biological role, actin-depolymerizing protein. Severs actin filaments (F-actin) and binds to actin monomers. This chain is Putative actin-depolymerizing factor 11 (ADF11), found in Arabidopsis thaliana (Mouse-ear cress).